The primary structure comprises 408 residues: MTTVTRSSSANLGASQKLAVKKGDAMMSSKGISNRSNRSALGDIGNKVSNMTIDPTKKALGLPVIKKEIIQKSKFTRSKTTVSESDILLQEKESACCSRAYTIFKDAIEPIVSTVDLMDISEDKPDAFSKVLLTVEDIDANDKDNPQLVSDYVNDIYHYMRHLEETFAVKANFLEGQEVTGKMRSILIDWLCQVHHRFHLLQETLYLTVSIIDRFLQVHPISRNKLQLVGVTSMLLASKYEEMYAPEVADFVYITDNAYTKADIRTMEQTILKTLDFSFGKPLCLHFLRRNSKAGQVDATKHTLAKYLMELTIIEYDMVHCNPSIIAAAALCLSMKVLDDSQWSETLAHYSNYSEKEIYPVMQKLAQLVVKAETSKLTAVKIKYSSSRFMKISSIPELKSNAITDLVL.

Belongs to the cyclin family. Cyclin AB subfamily. In terms of assembly, interacts with the CDC2 protein kinase to form a serine/threonine kinase holoenzyme complex also known as maturation promoting factor (MPF). The cyclin subunit imparts substrate specificity to the complex.

In terms of biological role, essential for the control of the cell cycle at the G2/M (mitosis) transition. In Patella vulgata (Common limpet), this protein is G2/mitotic-specific cyclin-B.